Consider the following 236-residue polypeptide: Large ribosomal subunit protein eL6 (236 aa).

This sequence belongs to the eukaryotic ribosomal protein eL6 family.

The polypeptide is Large ribosomal subunit protein eL6 (rpl6) (Dictyostelium discoideum (Social amoeba)).